The chain runs to 177 residues: Large ribosomal subunit protein uL6 (177 aa).

Residues 156 to 171 (PYKGKGVRYDTETIRR) are compositionally biased toward basic and acidic residues. A disordered region spans residues 156–177 (PYKGKGVRYDTETIRRKEGKKK).

This sequence belongs to the universal ribosomal protein uL6 family. As to quaternary structure, part of the 50S ribosomal subunit.

In terms of biological role, this protein binds to the 23S rRNA, and is important in its secondary structure. It is located near the subunit interface in the base of the L7/L12 stalk, and near the tRNA binding site of the peptidyltransferase center. The polypeptide is Large ribosomal subunit protein uL6 (Gluconacetobacter diazotrophicus (strain ATCC 49037 / DSM 5601 / CCUG 37298 / CIP 103539 / LMG 7603 / PAl5)).